A 611-amino-acid polypeptide reads, in one-letter code: Depudecin biosynthesis cluster-specific transcription activator DEP6 (611 aa).

A DNA-binding region (zn(2)-C6 fungal-type) is located at residues 17-44 (CEICRQRKVRCDRALPRCRRCERLNQAC). The interval 76 to 125 (DAPRGPASSMSSQSRSDSAAPAASRVPSVSASVPNSAATNPMDMVGTRSS) is disordered. The span at 78-113 (PRGPASSMSSQSRSDSAAPAASRVPSVSASVPNSAA) shows a compositional bias: low complexity.

It localises to the nucleus. Its function is as follows. Transcription factor that positively regulates the expression of the gene cluster that mediates the biosynthesis of depudecin, a highly oxidized eleven-carbon linear polyketide that acts as a histone deacetylase (HDAC) inhibitor and makes a small contribution to pathogenesis. This Fusarium langsethiae protein is Depudecin biosynthesis cluster-specific transcription activator DEP6.